We begin with the raw amino-acid sequence, 284 residues long: Ribosomal RNA small subunit methyltransferase A (284 aa).

Positions 28, 30, 55, 77, 103, and 123 each coordinate S-adenosyl-L-methionine.

This sequence belongs to the class I-like SAM-binding methyltransferase superfamily. rRNA adenine N(6)-methyltransferase family. RsmA subfamily.

The protein resides in the cytoplasm. It catalyses the reaction adenosine(1518)/adenosine(1519) in 16S rRNA + 4 S-adenosyl-L-methionine = N(6)-dimethyladenosine(1518)/N(6)-dimethyladenosine(1519) in 16S rRNA + 4 S-adenosyl-L-homocysteine + 4 H(+). Functionally, specifically dimethylates two adjacent adenosines (A1518 and A1519) in the loop of a conserved hairpin near the 3'-end of 16S rRNA in the 30S particle. May play a critical role in biogenesis of 30S subunits. This chain is Ribosomal RNA small subunit methyltransferase A, found in Bradyrhizobium diazoefficiens (strain JCM 10833 / BCRC 13528 / IAM 13628 / NBRC 14792 / USDA 110).